We begin with the raw amino-acid sequence, 1185 residues long: Adhesion G-protein coupled receptor G6 (1185 aa).

An N-terminal signal peptide occupies residues 1–32; the sequence is MISFISGRWWRWKFQNTLAVFLLLICLSTSVA. The Extracellular segment spans residues 33–849; sequence QSCQSSTSCN…AELIDEKNNR (817 aa). The cysteines at positions 41 and 67 are disulfide-linked. The CUB domain maps to 41–149; sequence CNVVLTDSQG…KGFHISYKQV (109 aa). The tract at residues 41-354 is mediates interaction with type IV collagen; sequence CNVVLTDSQG…SSTQTDSTLS (314 aa). The interval 41–839 is inhibits receptor signaling in absence of type IV collagen; it reads CNVVLTDSQG…FGILMDVSRA (799 aa). An N-linked (GlcNAc...) asparagine glycan is attached at Asn-68. Residues Glu-89 and Asp-97 each contribute to the Ca(2+) site. The cysteines at positions 94 and 111 are disulfide-linked. N-linked (GlcNAc...) asparagine glycosylation is present at Asn-121. 3 residues coordinate Ca(2+): Asp-134, Ser-136, and Val-137. In terms of domain architecture, Pentraxin (PTX) spans 154-355; it reads RNQKVTMPKS…STQTDSTLSC (202 aa). 3 disulfides stabilise this stretch: Cys-185/Cys-248, Cys-229/Cys-271, and Cys-369/Cys-375. N-linked (GlcNAc...) asparagine glycosylation is found at Asn-395, Asn-429, Asn-470, Asn-539, Asn-550, Asn-562, Asn-565, Asn-613, Asn-680, Asn-691, Asn-719, Asn-763, Asn-799, and Asn-818. Intrachain disulfides connect Cys-508–Cys-544 and Cys-532–Cys-563. Residues 658–840 form the GAIN-B domain; sequence PSLTISSKNL…GILMDVSRAA (183 aa). Disulfide bonds link Cys-790-Cys-822 and Cys-809-Cys-824. Positions 790 to 840 are GPS; sequence CVFWDFNLQNYSGGCNSDGCKVGSDSNSNRTVCLCNHLTHFGILMDVSRAA. The interval 829 to 837 is stachel; it reads HFGILMDVS. A helical membrane pass occupies residues 850 to 870; it reads VLTFITYIGCGISAIFSAATL. Residues 871–886 lie on the Cytoplasmic side of the membrane; that stretch reads LTYIAFEKLRRDYPSK. The helical transmembrane segment at 887–907 threads the bilayer; sequence ILMNLSTSLLFLNMVFLLDGW. At 908-915 the chain is on the extracellular side; it reads LASYEIKE. Residues 916–936 form a helical membrane-spanning segment; it reads LCVTVAVFLHFFLLTSFTWMG. Over 937 to 957 the chain is Cytoplasmic; it reads LESIHMYIALVKVFNTYIRRY. A helical membrane pass occupies residues 958-978; that stretch reads ILKFCIVGWGVPAAIVGIVLA. Over 979–1013 the chain is Extracellular; it reads VSKDSYGKNYYGKGKDGQGTSEFCWILNPVVFYVT. Residues 1014–1034 form a helical membrane-spanning segment; it reads CVAYFSIIFLMNVAMFIVVMI. The Cytoplasmic portion of the chain corresponds to 1035 to 1057; it reads QICGRNGKRSNRTLREDILRNLR. Residues 1058-1080 traverse the membrane as a helical segment; it reads SVVSLTFLLGMTWGFAFFAWGPV. Residues 1081–1083 are Extracellular-facing; sequence SLA. A helical membrane pass occupies residues 1084–1106; the sequence is FMYLFTIFNSLQGLFIFVFHCAL. Asn-1092 contributes to the 17alpha-hydroxyprogesterone binding site. Residues 1107-1185 lie on the Cytoplasmic side of the membrane; the sequence is KENVQKQWRR…RHSNADSTLQ (79 aa). Positions 1138-1160 are disordered; sequence NTKKVSSDNLGKSLSSSSFGSTT. Residues 1144–1158 show a composition bias toward low complexity; the sequence is SDNLGKSLSSSSFGS.

The protein belongs to the G-protein coupled receptor 2 family. Adhesion G-protein coupled receptor (ADGR) subfamily. In terms of processing, autoproteolytically processed at the GPS region of the GAIN-B domain; this cleavage modulates receptor activity. In terms of tissue distribution, expressed in Schwann cells of the posterior lateral line nerve and in brain.

It localises to the cell membrane. Its activity is regulated as follows. Forms a heterodimer of 2 chains generated by proteolytic processing that remain associated through non-covalent interactions mediated by the GAIN-B domain. In the inactivated receptor, the Stachel sequence (also named stalk) is embedded in the GAIN-B domain, where it adopts a beta-strand conformation. On activation, the Stachel moves into the 7 transmembrane region and adopts a twisted hook-shaped configuration that forms contacts within the receptor, leading to coupling of a G-alpha protein, which activates signaling. The cleaved GAIN-B and N-terminal domains can then dissociate from the rest of the receptor. In terms of biological role, adhesion G-protein coupled receptor (aGPCR) for steroid hormones, such as progesterone and 17alpha-hydroxyprogesterone (17OHP). Ligand binding causes a conformation change that triggers signaling via guanine nucleotide-binding proteins (G proteins) and modulates the activity of downstream effectors, such as adenylate cyclase. Adgrg6 is coupled to G(i) G alpha proteins and mediates inhibition of adenylate cyclase. Also able to couple to G(q) G proteins. Involved in myelination of the peripheral nervous system: required for differentiation of promyelinating Schwann cells and for normal myelination of axons. G-protein coupled receptor activity can also be activated by type IV collagen, a major constituent of the basement membrane. Also plays a role inner ear development. This chain is Adhesion G-protein coupled receptor G6 (adgrg6), found in Danio rerio (Zebrafish).